A 122-amino-acid polypeptide reads, in one-letter code: Basic phospholipase A2 homolog ecarpholin S (122 aa).

7 disulfide bridges follow: Cys26/Cys115, Cys28/Cys44, Cys43/Cys95, Cys49/Cys122, Cys50/Cys88, Cys57/Cys81, and Cys75/Cys86. The interval 105 to 117 (KKYTYYPNFWCKG) is important for membrane-damaging activities in eukaryotes and bacteria; heparin-binding.

As to expression, expressed by the venom gland.

It localises to the secreted. Its activity is regulated as follows. Suramin inhibits the myotoxic activity. Its function is as follows. Snake venom phospholipase A2 homolog that lacks enzymatic activity. Shows high myotoxin activities and displays edema-inducing activities. This chain is Basic phospholipase A2 homolog ecarpholin S, found in Echis carinatus (Saw-scaled viper).